The sequence spans 201 residues: Protein VirD3 (201 aa).

Disordered stretches follow at residues 28–51 (ASSSALSNVQGDVRDRPIPTSSSR) and 139–171 (RVNSDRRLPTDAENHPETRDPRKGRGSHGVTPA). Residues 141–161 (NSDRRLPTDAENHPETRDPRK) are compositionally biased toward basic and acidic residues.

In Rhizobium radiobacter (Agrobacterium tumefaciens), this protein is Protein VirD3 (virD3).